A 363-amino-acid chain; its full sequence is Type-2 angiotensin II receptor (363 aa).

Topologically, residues 1 to 45 (MKDNFSFAATSRNITSSRPFDNLNATGTNESAFNCSHKPSDKHLE) are extracellular. N-linked (GlcNAc...) asparagine glycosylation is found at N4, N13, N24, N29, and N34. 2 cysteine pairs are disulfide-bonded: C35/C290 and C117/C195. Residues 46–70 (AIPVLYYMIFVIGFAVNIVVVSLFC) traverse the membrane as a helical segment. Topologically, residues 71–80 (CQKGPKKVSS) are cytoplasmic. The helical transmembrane segment at 81–104 (IYIFNLALADLLLLATLPLWATYY) threads the bilayer. Residues Y103 and Y104 each contribute to the angiotensin II site. The Extracellular segment spans residues 105–114 (SYRYDWLFGP). Residues 115–140 (VMCKVFGSFLTLNMFASIFFITCMSV) traverse the membrane as a helical segment. Topologically, residues 141–159 (DRYQSVIYPFLSQRRNPWQ) are cytoplasmic. Residues 160 to 181 (ASYVVPLVWCMACLSSLPTFYF) form a helical membrane-spanning segment. The angiotensin II site is built by R182, Y204, and K215. At 182-206 (RDVRTIEYLGVNACIMAFPPEKYAQ) the chain is on the extracellular side. A helical membrane pass occupies residues 207 to 232 (WSAGIALMKNILGFIIPLIFIATCYF). Topologically, residues 233-257 (GIRKHLLKTNSYGKNRITRDQVLKM) are cytoplasmic. Residues 258–281 (AAAVVLAFIICWLPFHVLTFLDAL) traverse the membrane as a helical segment. D279 is an angiotensin II binding site. The Extracellular segment spans residues 282–294 (TWMGIINSCEVIA). Residues 295–320 (VIDLALPFAILLGFTNSCVNPFLYCF) form a helical membrane-spanning segment. Angiotensin II is bound at residue D297. Over 321 to 363 (VGNRFQQKLRSVFRVPITWLQGKRETMSCRKGSSLREMDTFVS) the chain is Cytoplasmic. A helix VIII region spans residues 324–333 (RFQQKLRSVF). A Phosphoserine; by PKC modification is found at S354.

Belongs to the G-protein coupled receptor 1 family. As to quaternary structure, interacts with MTUS1. Expressed at highest levels in adrenal gland and uterus.

It localises to the cell membrane. Receptor for angiotensin II, a vasoconstricting peptide. Signals primarily via a non-canonical G-protein- and beta-arrestin independent pathways. Cooperates with MTUS1 to inhibit ERK2 activation and cell proliferation. The chain is Type-2 angiotensin II receptor from Mus musculus (Mouse).